The chain runs to 117 residues: Large ribosomal subunit protein uL23 (117 aa).

This sequence belongs to the universal ribosomal protein uL23 family. In terms of assembly, part of the 50S ribosomal subunit. Contacts protein L29, and trigger factor when it is bound to the ribosome.

One of the early assembly proteins it binds 23S rRNA. One of the proteins that surrounds the polypeptide exit tunnel on the outside of the ribosome. Forms the main docking site for trigger factor binding to the ribosome. In Acetivibrio thermocellus (strain ATCC 27405 / DSM 1237 / JCM 9322 / NBRC 103400 / NCIMB 10682 / NRRL B-4536 / VPI 7372) (Clostridium thermocellum), this protein is Large ribosomal subunit protein uL23.